Here is a 142-residue protein sequence, read N- to C-terminus: Hemoglobin subunit alpha (142 aa).

Residues 2 to 142 (VLSPADKSNV…VSTVLTSKYR (141 aa)) form the Globin domain. Ser4 is modified (phosphoserine). Lys8 and Lys12 each carry N6-succinyllysine. N6-acetyllysine; alternate is present on Lys17. An N6-succinyllysine; alternate modification is found at Lys17. Tyr25 carries the phosphotyrosine modification. At Ser36 the chain carries Phosphoserine. Lys41 is modified (N6-succinyllysine). A Phosphoserine modification is found at Ser50. His59 contributes to the O2 binding site. Heme b is bound at residue His88. Position 103 is a phosphoserine (Ser103). Thr109 carries the post-translational modification Phosphothreonine. Ser125 and Ser132 each carry phosphoserine. 2 positions are modified to phosphothreonine: Thr135 and Thr138. A Phosphoserine modification is found at Ser139.

This sequence belongs to the globin family. In terms of assembly, heterotetramer of two alpha chains and two beta chains. As to expression, red blood cells.

In terms of biological role, involved in oxygen transport from the lung to the various peripheral tissues. Functionally, hemopressin acts as an antagonist peptide of the cannabinoid receptor CNR1. Hemopressin-binding efficiently blocks cannabinoid receptor CNR1 and subsequent signaling. In Chlorocebus aethiops (Green monkey), this protein is Hemoglobin subunit alpha (HBA).